The primary structure comprises 442 residues: Glutamate-1-semialdehyde 2,1-aminomutase (442 aa).

Residue Lys282 is modified to N6-(pyridoxal phosphate)lysine.

It belongs to the class-III pyridoxal-phosphate-dependent aminotransferase family. HemL subfamily. In terms of assembly, homodimer. It depends on pyridoxal 5'-phosphate as a cofactor.

It localises to the cytoplasm. It catalyses the reaction (S)-4-amino-5-oxopentanoate = 5-aminolevulinate. It participates in porphyrin-containing compound metabolism; protoporphyrin-IX biosynthesis; 5-aminolevulinate from L-glutamyl-tRNA(Glu): step 2/2. The sequence is that of Glutamate-1-semialdehyde 2,1-aminomutase from Polaromonas naphthalenivorans (strain CJ2).